A 402-amino-acid polypeptide reads, in one-letter code: 1-deoxy-D-xylulose 5-phosphate reductoisomerase (402 aa).

8 residues coordinate NADPH: Thr27, Gly28, Ser29, Ile30, Gly53, Lys54, Asn55, and Asn140. Lys141 contributes to the 1-deoxy-D-xylulose 5-phosphate binding site. Glu142 is a binding site for NADPH. Asp166 lines the Mn(2+) pocket. Ser167, Glu168, Ser192, and His215 together coordinate 1-deoxy-D-xylulose 5-phosphate. Mn(2+) is bound at residue Glu168. Gly221 lines the NADPH pocket. 4 residues coordinate 1-deoxy-D-xylulose 5-phosphate: Ser228, Asn233, Lys234, and Glu237. Mn(2+) is bound at residue Glu237.

It belongs to the DXR family. It depends on Mg(2+) as a cofactor. Mn(2+) is required as a cofactor.

It carries out the reaction 2-C-methyl-D-erythritol 4-phosphate + NADP(+) = 1-deoxy-D-xylulose 5-phosphate + NADPH + H(+). It participates in isoprenoid biosynthesis; isopentenyl diphosphate biosynthesis via DXP pathway; isopentenyl diphosphate from 1-deoxy-D-xylulose 5-phosphate: step 1/6. Its function is as follows. Catalyzes the NADPH-dependent rearrangement and reduction of 1-deoxy-D-xylulose-5-phosphate (DXP) to 2-C-methyl-D-erythritol 4-phosphate (MEP). This Lawsonia intracellularis (strain PHE/MN1-00) protein is 1-deoxy-D-xylulose 5-phosphate reductoisomerase.